Reading from the N-terminus, the 539-residue chain is Eukaryotic translation initiation factor 3 subunit L (539 aa).

Residues 306–514 (TFSDILLYIQ…IHIADTKVSH (209 aa)) form the PCI domain.

It belongs to the eIF-3 subunit L family. Component of the eukaryotic translation initiation factor 3 (eIF-3) complex. The eIF-3 complex interacts with pix.

The protein resides in the cytoplasm. Functionally, component of the eukaryotic translation initiation factor 3 (eIF-3) complex, which is involved in protein synthesis of a specialized repertoire of mRNAs and, together with other initiation factors, stimulates binding of mRNA and methionyl-tRNAi to the 40S ribosome. The eIF-3 complex specifically targets and initiates translation of a subset of mRNAs involved in cell proliferation. In Drosophila melanogaster (Fruit fly), this protein is Eukaryotic translation initiation factor 3 subunit L.